The chain runs to 445 residues: MNSVGVVKPQTLHFAEPLTLECNRTLPSFELIIETYGTLNSDKSNAVLICHALSGSHHAAGFHSDNDKKAGWWDNMIGPNKSIDTNRFFVVCVNNIGSCFGSTGPTSINPESSKAQVYGPDFPLVTIKDWVKTQAMLSDRLEIDVWHAVVGGSMGGMQALQWAADYPSRLKRCVVIASTPKLSAQNIAFNEVARQSILSDPDFKNGRYLQAGTYPRRGLILARMVGHITYLTDDAMKAKFGRDLKSGKFMYGYDVEFQVESYLRYQGERFSENFDANTYLLMTKALDYFDPTRDYPLTQSAQPIDSLVPEELLASSLVESVKADSSEDELAKTLADSADIDNISASNHQELTALKAAFAHTECQYLIVSFTTDWRFAPERSQEIVDALMATGKPVSYINVDAPHGHDSFLFDIPRYMGAVKGFLNAPFMTDNQSKNSQQKLGARS.

One can recognise an AB hydrolase-1 domain in the interval 45-411; it reads NAVLICHALS…APHGHDSFLF (367 aa). Serine 153 acts as the Nucleophile in catalysis. A substrate-binding site is contributed by arginine 223. Active-site residues include aspartate 373 and histidine 406. Aspartate 407 lines the substrate pocket.

This sequence belongs to the AB hydrolase superfamily. MetX family. Homodimer.

It localises to the cytoplasm. It catalyses the reaction L-homoserine + succinyl-CoA = O-succinyl-L-homoserine + CoA. Its pathway is amino-acid biosynthesis; L-methionine biosynthesis via de novo pathway; O-succinyl-L-homoserine from L-homoserine: step 1/1. Its function is as follows. Transfers a succinyl group from succinyl-CoA to L-homoserine, forming succinyl-L-homoserine. The polypeptide is Homoserine O-succinyltransferase (Psychrobacter arcticus (strain DSM 17307 / VKM B-2377 / 273-4)).